The following is a 394-amino-acid chain: MSRTPGFSFSELARDGHARTGVLSTPHGDVLTPTFMPVGTQGSVKTLTPAEVAATGARIVLGNTYHLWLRPGPELVAQLGGLHAFTRWPHAMLTDSGGFQAFSLAERRTLVEDGFVFRSHLDGARKALTPEVAMEVQGLLGADIAMQLDVCPPGGAPRPEVEEACRLTTRWGKRCLAAKRPSQALFGIVQGGTSVALRMAHADELGALPFDGLALGGFSVGEPIAMMHEVVAQIGPHLDPTRPRYLMGVGTPIDLVHAIGAGVDMFDCVLPTRNARNGQALTQHGKIVIKQARYKEDRSPLDPTCACPTCTGGYSRAYLRHLYMAGEILVLRLLTEHNLHLYGRLMREARAAIAEGRYAAFARAWLGASDAGNANDANETVGATESTESTESTE.

Aspartate 95 acts as the Proton acceptor in catalysis. Substrate contacts are provided by residues 95 to 99, aspartate 149, glutamine 190, and glycine 217; that span reads DSGGF. Positions 248-254 are RNA binding; sequence GVGTPID. Aspartate 267 serves as the catalytic Nucleophile. The tract at residues 272–276 is RNA binding; important for wobble base 34 recognition; that stretch reads TRNAR. Positions 305, 307, 310, and 337 each coordinate Zn(2+). Residues 375 to 394 form a disordered region; it reads NDANETVGATESTESTESTE.

This sequence belongs to the queuine tRNA-ribosyltransferase family. In terms of assembly, homodimer. Within each dimer, one monomer is responsible for RNA recognition and catalysis, while the other monomer binds to the replacement base PreQ1. The cofactor is Zn(2+).

It catalyses the reaction 7-aminomethyl-7-carbaguanine + guanosine(34) in tRNA = 7-aminomethyl-7-carbaguanosine(34) in tRNA + guanine. Its pathway is tRNA modification; tRNA-queuosine biosynthesis. Its function is as follows. Catalyzes the base-exchange of a guanine (G) residue with the queuine precursor 7-aminomethyl-7-deazaguanine (PreQ1) at position 34 (anticodon wobble position) in tRNAs with GU(N) anticodons (tRNA-Asp, -Asn, -His and -Tyr). Catalysis occurs through a double-displacement mechanism. The nucleophile active site attacks the C1' of nucleotide 34 to detach the guanine base from the RNA, forming a covalent enzyme-RNA intermediate. The proton acceptor active site deprotonates the incoming PreQ1, allowing a nucleophilic attack on the C1' of the ribose to form the product. After dissociation, two additional enzymatic reactions on the tRNA convert PreQ1 to queuine (Q), resulting in the hypermodified nucleoside queuosine (7-(((4,5-cis-dihydroxy-2-cyclopenten-1-yl)amino)methyl)-7-deazaguanosine). In Sorangium cellulosum (strain So ce56) (Polyangium cellulosum (strain So ce56)), this protein is Queuine tRNA-ribosyltransferase.